The chain runs to 853 residues: DNA mismatch repair protein MutS (853 aa).

Position 614–621 (Gly614–Ser621) interacts with ATP.

The protein belongs to the DNA mismatch repair MutS family.

In terms of biological role, this protein is involved in the repair of mismatches in DNA. It is possible that it carries out the mismatch recognition step. This protein has a weak ATPase activity. The chain is DNA mismatch repair protein MutS from Escherichia coli (strain SE11).